The chain runs to 782 residues: MGSKITDKKRKSRDSESESDDELANGLFDGILSQSEDEEDYLPSDDDDDVEDSENEGTGASEDDDDDDDDDDILSDDIPSDVDSEEAINRLVKQQEELEITEPGVDPKREEDDGADRNYRIEKDANGGERYVYDEIDPVYDSDDSDAKGPVNTIGDIPLSFYDSYPHIGYDINGKKIMRPATGDALQSLLDSIEVPKGWTGLTDVDTGNPLNLTQDELELVRRVQMGLLPTDLQDPYPDTVEYFTSIEEKMPLSSAPEPKRRFLPSKNEAKQIMKLVRAIREGRILPYKPPEEREREEEEQEEVHFDLWQNEEPQAPNPMHIPAPKLAPPGYDLSYNPPEEYLPSKEEREEWENADPEDREKEYLPQKHNALRKVPAWGNLVKERFERCMDLYLAPRIRKNRLNIDPNSLLPKLPSPSELKPFPTVAQTIFRGHEGRVRSVSVDPTGVALATGGDDGTVRVWELLTGRQVWSVKLNSEEPVNAVRWRPTKDAFVLAAAAGEDIFLMVPTHASVTPALDQASRDILATGFGYATNGQQPAAPVSKEPAAKWARPGTKLEDEGVLIRITVRSTVKVINWHRRGDHFATVSPTGQRSSVAIHTLSKHLTQIPFRKLSGLAQTAAFHPLRPLFFVATQRTIRCYDLQKLELVKVVQPGAKWISSFDIHPGGDNLIVGSYDKRLLWHDLDLSNRPYKTMRFHGQAIRQVRYHRGGLPLFADASDDGSLQIFHGKVPNDQLENPTIVPVKMLKGHKVVSKLGVLDIDWHPREPWCVSAGADGTARLWM.

Disordered regions lie at residues 1 to 123 (MGSK…RIEK) and 339 to 361 (PEEY…EDRE). Over residues 35 to 86 (SEDEEDYLPSDDDDDVEDSENEGTGASEDDDDDDDDDDILSDDIPSDVDSEE) the composition is skewed to acidic residues. Basic and acidic residues predominate over residues 105–123 (VDPKREEDDGADRNYRIEK). 7 WD repeats span residues 433 to 472 (GHEG…QVWS), 476 to 516 (NSEE…VTPA), 567 to 609 (TVRS…TQIP), 612 to 650 (KLSG…LVKV), 653 to 692 (PGAK…RPYK), 696 to 736 (FHGQ…DQLE), and 752 to 782 (VSKL…RLWM).

This sequence belongs to the WD repeat BOP1/ERB1 family. In terms of assembly, component of the NOP7 complex, composed of ERB1, NOP7 and YTM1. The complex is held together by ERB1, which interacts with NOP7 via its N-terminal domain and with YTM1 via a high-affinity interaction between the seven-bladed beta-propeller domains of the 2 proteins. The NOP7 complex associates with the 66S pre-ribosome.

Its subcellular location is the nucleus. It localises to the nucleolus. It is found in the nucleoplasm. Its function is as follows. Component of the NOP7 complex, which is required for maturation of the 25S and 5.8S ribosomal RNAs and formation of the 60S ribosome. This is Ribosome biogenesis protein ERB1 from Chaetomium globosum (strain ATCC 6205 / CBS 148.51 / DSM 1962 / NBRC 6347 / NRRL 1970) (Soil fungus).